We begin with the raw amino-acid sequence, 182 residues long: UPF0301 protein NMCC_1249 (182 aa).

The protein belongs to the UPF0301 (AlgH) family.

This is UPF0301 protein NMCC_1249 from Neisseria meningitidis serogroup C (strain 053442).